The following is a 539-amino-acid chain: F-box only protein 31 (539 aa).

The segment at 11-53 (GPSRGCRRRQQRRGPAETAAADSEPDTDPEEERIEASAGVGGG) is disordered. S33 carries the phosphoserine modification. Residue S33 is modified to Phosphoserine; by PKB/AKT1. Over residues 33–43 (SEPDTDPEEER) the composition is skewed to acidic residues. At T37 the chain carries Phosphothreonine. Residues 64 to 69 (RCSLLE) carry the D box motif. Residues 64-110 (RCSLLELPPELLVEIFASLPGTDLPSLAQVCTKFRRILHTDTIWRRR) form the F-box domain. Zn(2+) is bound by residues C206, H214, C230, and H236. Position 278 is a phosphoserine; by ATM (S278). The DDL motif motif lies at 297 to 299 (DDL). Positions 377 to 397 (VRQEQQEGGHEAGEGRGRQGP) are enriched in basic and acidic residues. Residues 377–446 (VRQEQQEGGH…PAQCGQGQPF (70 aa)) form a disordered region. A Phosphothreonine; by MTOR modification is found at T419. At S480 the chain carries Phosphoserine.

It belongs to the FBXO31 family. Part of a SCF (SKP1-cullin-F-box) protein ligase complex SCF(FBXO31) composed of CUL1, SKP1, RBX1 and FBXO31. Interacts (when phosphorylated at Ser-33) with CDC20, promoting ubiquitination by the APC/C complex. Phosphorylation at Ser-278 by ATM following gamma-irradiation results in its stabilization. Phosphorylation at Thr-419 and Ser-480 in absence of stress promotes its ubiquitination and degradation by the SCF(FBXO46) complex. Phosphorylation at Ser-33 by AKT1 promotes association with CDC20 and ubiquitination by the APC/C complex. In terms of processing, ubiquitinated by the SCF(FBXO46) complex in absence of stress, promoting its degradation. Ubiquitinated by the APC/C complex following phosphorylation at Ser-33, leading to its degradation by the proteasome. In terms of tissue distribution, highly expressed in brain. Expressed at moderate levels in most tissues, except bone marrow.

It is found in the cytoplasm. Its subcellular location is the cytoskeleton. The protein localises to the microtubule organizing center. It localises to the centrosome. The protein operates within protein modification; protein ubiquitination. Functionally, substrate-recognition component of the SCF(FBXO31) protein ligase complex, which specifically mediates the ubiquitination of proteins amidated at their C-terminus in response to oxidative stress, leading to their degradation by the proteasome. FBXO31 specifically recognizes and binds C-terminal peptides bearing an amide: C-terminal amidation in response to oxidative stress takes place following protein fragmentation. The SCF(FBXO31) also plays a role in G1 arrest following DNA damage by mediating ubiquitination of phosphorylated cyclin-D1 (CCND1), promoting its degradation by the proteasome, resulting in G1 arrest. The SCF(FBXO31) complex is however not a major regulator of CCND1 stability during the G1/S transition. In response to genotoxic stress, the SCF(FBXO31) complex directs ubiquitination and degradation of phosphorylated MDM2, thereby promoting p53/TP53-mediated DNA damage response. SCF(FBXO31) complex is required for genomic integrity by catalyzing ubiquitination and degradation of cyclin-A (CCNA1 and/or CCNA2) during the G1 phase. In response to genotoxic stress, the SCF(FBXO31) complex directs ubiquitination and degradation of phosphorylated FBXO46 and MAP2K6. SCF(FBXO31) complex promotes ubiquitination and degradation of CDT1 during the G2 phase to prevent re-replication. The SCF(FBXO31) complex also mediates ubiquitination and degradation of DUSP6, OGT and PARD6A. The protein is F-box only protein 31 of Homo sapiens (Human).